We begin with the raw amino-acid sequence, 2009 residues long: Sodium channel protein type 1 subunit alpha (2009 aa).

Topologically, residues 1–128 are cytoplasmic; the sequence is MEQTVLVPPG…KIAIKILVHS (128 aa). The span at 28-48 shows a compositional bias: basic and acidic residues; sequence RIAEEKAKNPKPDKKDDDENG. Residues 28–60 are disordered; sequence RIAEEKAKNPKPDKKDDDENGPKPNSDLEAGKN. Residues 110 to 454 form an I repeat; that stretch reads ILTPFNPLRK…QQMLEQLKKQ (345 aa). Residues 129–146 form a helical membrane-spanning segment; it reads LFSMLIMCTILTNCVFMT. Residues 147–152 are Extracellular-facing; that stretch reads MSNPPD. The chain crosses the membrane as a helical span at residues 153 to 177; sequence WTKNVEYTFTGIYTFESLIKIIARG. Topologically, residues 178 to 188 are cytoplasmic; the sequence is FCLEDFTFLRD. Residues 189–205 form a helical membrane-spanning segment; the sequence is PWNWLDFTVITFAYVTE. The Extracellular segment spans residues 206–213; it reads FVDLGNVS. Residue Asn-211 is glycosylated (N-linked (GlcNAc...) asparagine). A helical transmembrane segment spans residues 214–235; it reads ALRTFRVLRALKTISVIPGLKT. The Cytoplasmic portion of the chain corresponds to 236-245; sequence IVGALIQSVK. Residues 246-269 form a helical membrane-spanning segment; the sequence is KLSDVMILTVFCLSVFALIGLQLF. Over 270–369 the chain is Extracellular; the sequence is MGNLRNKCVQ…YGYTSFDTFS (100 aa). Cystine bridges form between Cys-277-Cys-345 and Cys-336-Cys-351. Residues Asn-284, Asn-295, Asn-301, Asn-306, and Asn-338 are each glycosylated (N-linked (GlcNAc...) asparagine). The segment at residues 370–384 is an intramembrane region (pore-forming); the sequence is WAFLSLFRLMTQDFW. Residues 385–397 lie on the Extracellular side of the membrane; it reads ENLYQLTLRAAGK. Residues 398–423 traverse the membrane as a helical segment; sequence TYMIFFVLVIFLGSFYLINLILAVVA. Residues 424-768 are Cytoplasmic-facing; sequence MAYEEQNQAT…HIVNLVVMDP (345 aa). Residues 458-528 form a disordered region; that stretch reads AQQAAAATAS…EFHKSESEDS (71 aa). Ser-470 carries the post-translational modification Phosphoserine. Over residues 479–492 the composition is skewed to low complexity; that stretch reads LSDSSSEASKLSSK. A compositionally biased stretch (basic residues) spans 495-506; sequence KERRNRRKKRKQ. A compositionally biased stretch (basic and acidic residues) spans 507 to 528; sequence KEQSGGEEKDDDEFHKSESEDS. Residues Ser-523, Ser-525, Ser-550, Ser-551, Ser-607, and Ser-730 each carry the phosphoserine modification. The segment at 584 to 628 is disordered; the sequence is VGSENDFADDEHSTFEDNESRRDSLFVPRRHGERRNSNLSQTSRS. Residues 593–607 are compositionally biased toward basic and acidic residues; it reads DEHSTFEDNESRRDS. The stretch at 750-1022 is one II repeat; the sequence is CSPYWLKVKH…QIAVDRMHKG (273 aa). The helical transmembrane segment at 769–787 threads the bilayer; that stretch reads FVDLAITICIVLNTLFMAM. Residues 788–797 lie on the Extracellular side of the membrane; that stretch reads EHYPMTEHFN. A helical membrane pass occupies residues 798–820; sequence HVLTVGNLVFTGIFTAEMFLKII. At 821–830 the chain is on the cytoplasmic side; that stretch reads AMDPYYYFQE. The chain crosses the membrane as a helical span at residues 831-849; that stretch reads GWNIFDGFIVTLSLVELGL. Residues 850 to 854 are Extracellular-facing; sequence ANVEG. The chain crosses the membrane as a helical span at residues 855–874; that stretch reads LSVLRSFRLLRVFKLAKSWP. Topologically, residues 875–891 are cytoplasmic; it reads TLNMLIKIIGNSVGALG. A helical membrane pass occupies residues 892–912; it reads NLTLVLAIIVFIFAVVGMQLF. Residues 913-938 lie on the Extracellular side of the membrane; that stretch reads GKSYKDCVCKIATDCKLPRWHMNDFF. Residues Cys-921 and Cys-927 are joined by a disulfide bond. Residues 939–952 constitute an intramembrane region (pore-forming); it reads HSFLIVFRVLCGEW. Residues 953–965 lie on the Extracellular side of the membrane; that stretch reads IETMWDCMEVAGQ. A disulfide bridge connects residues Cys-959 and Cys-968. Residues 966-992 form a helical membrane-spanning segment; the sequence is AMCLTVFMMVMVIRNLVVLNLFLALLL. Residues 993–1218 lie on the Cytoplasmic side of the membrane; sequence SSFSADNLAA…RTCFRIVEHN (226 aa). The segment at 1129–1163 is disordered; the sequence is TEDFSSESDLEESKEKLNESSSSSEGSTVDIGAPA. The III repeat unit spans residues 1200–1514; the sequence is RGKQWWNLRR…KKYYNAMKKL (315 aa). The chain crosses the membrane as a helical span at residues 1219–1237; that stretch reads WFETFIVFMILLSSGALAF. Residues 1238 to 1250 lie on the Extracellular side of the membrane; the sequence is EDIYIDQRKTIKT. A helical transmembrane segment spans residues 1251 to 1276; sequence MLEYADKVFTYIFILEMLLKWVAYGY. Residues 1277-1278 lie on the Cytoplasmic side of the membrane; the sequence is QT. Residues 1279–1304 traverse the membrane as a helical segment; it reads YFTNAWCWLDFLIVDVSLVSLTANAL. Over 1305 to 1313 the chain is Extracellular; sequence GYSELGAIK. The chain crosses the membrane as a helical span at residues 1314 to 1332; the sequence is SLRTLRALRPLRALSRFEG. The Cytoplasmic segment spans residues 1333 to 1345; sequence MRVVVNALLGAIP. Residues 1346–1369 traverse the membrane as a helical segment; it reads SIMNVLLVCLIFWLIFSIMGVNLF. The Extracellular segment spans residues 1370–1415; sequence AGKFYHCVNTTTGDTFEITEVNNHSDCLKLIERNETARWKNVKVNF. Cys-1376 and Cys-1396 are oxidised to a cystine. 3 N-linked (GlcNAc...) asparagine glycosylation sites follow: Asn-1378, Asn-1392, and Asn-1403. The segment at residues 1416–1433 is an intramembrane region (pore-forming); sequence DNVGFGYLSLLQVATFKG. Over 1434-1457 the chain is Extracellular; that stretch reads WMDIMYAAVDSRNVELQPKYEESL. A helical transmembrane segment spans residues 1458–1483; sequence YMYLYFVIFIIFGSFFTLNLFIGVII. The Cytoplasmic segment spans residues 1484–1541; it reads DNFNQQKKKFGGQDIFMTEEQKKYYNAMKKLGSKKPQKPIPRPGNKFQGMVFDFVTRQ. Ser-1516 is subject to Phosphoserine; by PKC. The IV repeat unit spans residues 1523-1821; the sequence is IPRPGNKFQG…WEKFDPDATQ (299 aa). The chain crosses the membrane as a helical span at residues 1542–1560; it reads VFDISIMILICLNMVTMMV. The Extracellular segment spans residues 1561–1571; that stretch reads ETDDQSDYVTS. The S1-S2 loop of repeat IV stretch occupies residues 1561 to 1571; the sequence is ETDDQSDYVTS. The helical transmembrane segment at 1572 to 1593 threads the bilayer; it reads ILSRINLVFIVLFTGECVLKLI. At 1594–1601 the chain is on the cytoplasmic side; it reads SLRHYYFT. The helical transmembrane segment at 1602–1623 threads the bilayer; that stretch reads IGWNIFDFVVVILSIVGMFLAE. The segment at 1619 to 1636 is S3b-S4 loop of repeat IV; the sequence is MFLAELIEKYFVSPTLFR. At 1624 to 1636 the chain is on the extracellular side; the sequence is LIEKYFVSPTLFR. The helical transmembrane segment at 1637-1655 threads the bilayer; the sequence is VIRLARIGRILRLIKGAKG. Over 1656 to 1665 the chain is Cytoplasmic; it reads IRTLLFALMM. A helical membrane pass occupies residues 1666–1688; it reads SLPALFNIGLLLFLVMFIYAIFG. Topologically, residues 1689-1711 are extracellular; sequence MSNFAYVKREVGIDDMFNFETFG. Residues 1712-1726 constitute an intramembrane region (pore-forming); that stretch reads NSMICLFQITTSAGW. Over 1727–1759 the chain is Extracellular; it reads DGLLAPILNSKPPDCDPNKVNPGSSVKGDCGNP. A disulfide bridge links Cys-1741 with Cys-1756. The helical transmembrane segment at 1760 to 1788 threads the bilayer; sequence SVGIFFFVSYIIISFLVVVNMYIAVILEN. Topologically, residues 1789-2009 are cytoplasmic; it reads FSVATEESAE…EGKDEKAKGK (221 aa). An IQ domain is found at 1915 to 1944; sequence EEVSAVIIQRAYRRHLLKRTVKQASFTYNK. The tract at residues 1986–2009 is disordered; the sequence is YDRVTKPIVEKHEQEGKDEKAKGK. A compositionally biased stretch (basic and acidic residues) spans 1988–2009; the sequence is RVTKPIVEKHEQEGKDEKAKGK.

It belongs to the sodium channel (TC 1.A.1.10) family. Nav1.1/SCN1A subfamily. In terms of assembly, the Nav1.1 voltage-gated sodium channel consists of an ion-conducting alpha subunit SCN1A which is functional on its own regulated by one or more beta-1 (SCN1B), beta-2 (SCN2B), beta-3 (SCN3B) and beta-4 (SCN4B) subunits. SCN1B and SCN3B are non-covalently associated with SCN1A. SCN2B and SCN4B are disulfide-linked to SCN1A. SCN1B regulates both the expression at the plasma membrane and the voltage dependence of Nav1.1 inactivation. SCN3B and SCN4B reduce Nav1.1 conductance. Probably interacts with TMEM233; modulates the gating properties of NaV1.1. Interacts with FGF13; regulates the steady-state inactivation of Nav.1.1. Post-translationally, phosphorylation at Ser-1516 by PKC in a highly conserved cytoplasmic loop slows inactivation of the sodium channel and reduces peak sodium currents.

The protein resides in the cell membrane. The enzyme catalyses Na(+)(in) = Na(+)(out). Its activity is regulated as follows. Activated by the spider toxins Hm1a and Hm1b (H.maculata, AC P60992 and AC P0DOC5) eliciting acute pain and mechanical allodynia. Inhibited by the conotoxin GVIIJ. Pore-forming subunit of Nav1.1, a voltage-gated sodium (Nav) channel that directly mediates the depolarizing phase of action potentials in excitable membranes. Navs, also called VGSCs (voltage-gated sodium channels) or VDSCs (voltage-dependent sodium channels), operate by switching between closed and open conformations depending on the voltage difference across the membrane. In the open conformation they allow Na(+) ions to selectively pass through the pore, along their electrochemical gradient. The influx of Na(+) ions provokes membrane depolarization, initiating the propagation of electrical signals throughout cells and tissues. By regulating the excitability of neurons, ensures that they respond appropriately to synaptic inputs, maintaining the balance between excitation and inhibition in brain neural circuits. Nav1.1 plays a role in controlling the excitability and action potential propagation from somatosensory neurons, thereby contributing to the sensory perception of mechanically-induced pain. The sequence is that of Sodium channel protein type 1 subunit alpha from Rattus norvegicus (Rat).